We begin with the raw amino-acid sequence, 159 residues long: Protein hunchback (159 aa).

Residues 18–34 (HNHHHHHHHGHHQHQQR) show a composition bias toward basic residues. Disordered stretches follow at residues 18 to 49 (HNHH…QSPL) and 119 to 159 (LTPP…KYMA). Positions 140–159 (EPEKEHDLMSNSSEDMKYMA) are enriched in basic and acidic residues.

It belongs to the hunchback C2H2-type zinc-finger protein family.

The protein localises to the nucleus. Gap class segmentation protein that controls development of head structures. The protein is Protein hunchback (hb) of Drosophila soonae (Fruit fly).